Reading from the N-terminus, the 233-residue chain is Ribosomal RNA small subunit methyltransferase G (233 aa).

Residues Gly96, Leu101, Leu146–Glu147, and Arg160 contribute to the S-adenosyl-L-methionine site.

It belongs to the methyltransferase superfamily. RNA methyltransferase RsmG family.

Its subcellular location is the cytoplasm. It catalyses the reaction guanosine(527) in 16S rRNA + S-adenosyl-L-methionine = N(7)-methylguanosine(527) in 16S rRNA + S-adenosyl-L-homocysteine. Its function is as follows. Specifically methylates the N7 position of guanine in position 527 of 16S rRNA. The sequence is that of Ribosomal RNA small subunit methyltransferase G from Sphingopyxis alaskensis (strain DSM 13593 / LMG 18877 / RB2256) (Sphingomonas alaskensis).